A 328-amino-acid chain; its full sequence is tRNA uridine(34) hydroxylase (328 aa).

One can recognise a Rhodanese domain in the interval 130–224 (LDKDTVVLDT…YGKDPEVQGE (95 aa)). Catalysis depends on C184, which acts as the Cysteine persulfide intermediate.

The protein belongs to the TrhO family.

The catalysed reaction is uridine(34) in tRNA + AH2 + O2 = 5-hydroxyuridine(34) in tRNA + A + H2O. Catalyzes oxygen-dependent 5-hydroxyuridine (ho5U) modification at position 34 in tRNAs. This is tRNA uridine(34) hydroxylase from Streptococcus pneumoniae (strain Hungary19A-6).